A 978-amino-acid polypeptide reads, in one-letter code: Translation initiation factor IF-2 (978 aa).

2 disordered regions span residues 107–129 (AEAPALETEQEVEAAPQVDNLEL) and 146–387 (QEEE…HRVQ). The segment covering 146 to 169 (QEEELSERRRQREEQEARSREASE) has biased composition (basic and acidic residues). Positions 170-186 (KAAAVAAEAAEAAAAQA) are enriched in low complexity. Residues 215 to 259 (AEKEQHLAKEKGLAREKELAESKARAAEDVVRAADLGDRRRKAES) are compositionally biased toward basic and acidic residues. Low complexity-rich tracts occupy residues 295 to 326 (KPAAGAVPAKPAKPGAPGAPGAPAAGAAAGAG) and 349 to 361 (PTRGATAAPGAGR). The span at 375-386 (GSSDRDRDDHRV) shows a compositional bias: basic and acidic residues. A tr-type G domain is found at 478 to 647 (PRAPVVTVMG…LLQAEVLELK (170 aa)). The interval 487-494 (GHVDHGKT) is G1. 487–494 (GHVDHGKT) is a GTP binding site. The segment at 512–516 (GITQH) is G2. The G3 stretch occupies residues 533-536 (DTPG). Residues 533-537 (DTPGH) and 587-590 (NKID) each bind GTP. The tract at residues 587 to 590 (NKID) is G4. The tract at residues 623 to 625 (SAK) is G5.

This sequence belongs to the TRAFAC class translation factor GTPase superfamily. Classic translation factor GTPase family. IF-2 subfamily.

It is found in the cytoplasm. Functionally, one of the essential components for the initiation of protein synthesis. Protects formylmethionyl-tRNA from spontaneous hydrolysis and promotes its binding to the 30S ribosomal subunits. Also involved in the hydrolysis of GTP during the formation of the 70S ribosomal complex. This chain is Translation initiation factor IF-2, found in Albidiferax ferrireducens (strain ATCC BAA-621 / DSM 15236 / T118) (Rhodoferax ferrireducens).